Reading from the N-terminus, the 130-residue chain is Ribosome-binding factor A (130 aa).

The protein belongs to the RbfA family. In terms of assembly, monomer. Binds 30S ribosomal subunits, but not 50S ribosomal subunits or 70S ribosomes.

The protein localises to the cytoplasm. Its function is as follows. One of several proteins that assist in the late maturation steps of the functional core of the 30S ribosomal subunit. Associates with free 30S ribosomal subunits (but not with 30S subunits that are part of 70S ribosomes or polysomes). Required for efficient processing of 16S rRNA. May interact with the 5'-terminal helix region of 16S rRNA. The protein is Ribosome-binding factor A of Roseiflexus castenholzii (strain DSM 13941 / HLO8).